The chain runs to 374 residues: uncharacterized protein (374 aa).

This sequence belongs to the mimivirus R640 family.

It is found in the virion. This is an uncharacterized protein from Acanthamoeba polyphaga (Amoeba).